The sequence spans 76 residues: Defensin-like protein 163 (76 aa).

The N-terminal stretch at 1–27 is a signal peptide; it reads MAKLIYSYLFISMFVLSVLLALPNAEG. Cystine bridges form between Cys-33–Cys-76, Cys-43–Cys-62, Cys-48–Cys-70, and Cys-52–Cys-72.

Belongs to the DEFL family.

The protein localises to the secreted. The chain is Defensin-like protein 163 (LCR24) from Arabidopsis thaliana (Mouse-ear cress).